We begin with the raw amino-acid sequence, 471 residues long: uncharacterized protein (471 aa).

11 consecutive transmembrane segments (helical) span residues 15 to 35 (LWGP…TILL), 66 to 86 (PLQA…IVGV), 89 to 109 (AIMF…LFAM), 147 to 167 (WLGV…IMVQ), 179 to 199 (FSFN…LVVI), 210 to 230 (EFVV…IVLM), 237 to 257 (AFFS…GGFA), 303 to 323 (VIGI…IVLA), 353 to 373 (GYFV…VVIF), 386 to 406 (LAGH…AAGG), and 410 to 430 (IWGV…IALL).

The protein belongs to the alanine or glycine:cation symporter (AGCS) (TC 2.A.25) family.

The protein localises to the cell membrane. This is an uncharacterized protein from Bacillus subtilis (strain 168).